The chain runs to 742 residues: Phosphoribosylformylglycinamidine synthase subunit PurL (742 aa).

The active site involves His54. Tyr57 and Lys96 together coordinate ATP. Glu98 is a binding site for Mg(2+). Residues 99 to 102 and Arg121 contribute to the substrate site; that span reads SHNH. His100 functions as the Proton acceptor in the catalytic mechanism. Position 122 (Asp122) interacts with Mg(2+). Gln245 is a binding site for substrate. Asp273 contributes to the Mg(2+) binding site. Residue 317–319 coordinates substrate; it reads ESQ. Asp500 and Gly537 together coordinate ATP. Residue Asn538 coordinates Mg(2+). Ser540 provides a ligand contact to substrate.

Belongs to the FGAMS family. As to quaternary structure, monomer. Part of the FGAM synthase complex composed of 1 PurL, 1 PurQ and 2 PurS subunits.

It is found in the cytoplasm. It carries out the reaction N(2)-formyl-N(1)-(5-phospho-beta-D-ribosyl)glycinamide + L-glutamine + ATP + H2O = 2-formamido-N(1)-(5-O-phospho-beta-D-ribosyl)acetamidine + L-glutamate + ADP + phosphate + H(+). It participates in purine metabolism; IMP biosynthesis via de novo pathway; 5-amino-1-(5-phospho-D-ribosyl)imidazole from N(2)-formyl-N(1)-(5-phospho-D-ribosyl)glycinamide: step 1/2. In terms of biological role, part of the phosphoribosylformylglycinamidine synthase complex involved in the purines biosynthetic pathway. Catalyzes the ATP-dependent conversion of formylglycinamide ribonucleotide (FGAR) and glutamine to yield formylglycinamidine ribonucleotide (FGAM) and glutamate. The FGAM synthase complex is composed of three subunits. PurQ produces an ammonia molecule by converting glutamine to glutamate. PurL transfers the ammonia molecule to FGAR to form FGAM in an ATP-dependent manner. PurS interacts with PurQ and PurL and is thought to assist in the transfer of the ammonia molecule from PurQ to PurL. The sequence is that of Phosphoribosylformylglycinamidine synthase subunit PurL from Oceanobacillus iheyensis (strain DSM 14371 / CIP 107618 / JCM 11309 / KCTC 3954 / HTE831).